The sequence spans 815 residues: (E)-gamma-bisabolene synthase (815 aa).

Positions 561, 565, 709, and 717 each coordinate Mg(2+). The DDXXD motif signature appears at 561-565; it reads DDMYD.

The protein belongs to the terpene synthase family. Tpsd subfamily. Requires Mg(2+) as cofactor. Mn(2+) serves as cofactor.

The protein resides in the cytoplasm. It carries out the reaction (2E,6E)-farnesyl diphosphate = (E)-gamma-bisabolene + diphosphate. It functions in the pathway terpene metabolism; oleoresin biosynthesis. In terms of biological role, involved in defensive oleoresin formation in conifers in response to insect attack or other injury. Involved in sesquiterpene (C15) olefins biosynthesis. Produces mainly (E)-gamma-bisabolene when used with farnesyl diphosphate as substrate. No activity with geranyl diphosphate or geranylgeranyl diphosphate. This chain is (E)-gamma-bisabolene synthase (TPS3), found in Pseudotsuga menziesii (Douglas-fir).